The primary structure comprises 467 residues: Mitogen-activated protein kinase kinase kinase 8 (467 aa).

T80 carries the post-translational modification Phosphothreonine. 2 positions are modified to phosphoserine: S138 and S141. ATP is bound by residues 144 to 152 (VPRGAFGKV) and K167. The 243-residue stretch at 146-388 (RGAFGKVYLA…AADLLKHEAL (243 aa)) folds into the Protein kinase domain. Catalysis depends on D253, which acts as the Proton acceptor. T290 carries the phosphothreonine modification. 2 positions are modified to phosphoserine: S400 and S443.

This sequence belongs to the protein kinase superfamily. STE Ser/Thr protein kinase family. MAP kinase kinase kinase subfamily. Forms a ternary complex with NFKB1/p105 and TNIP2. Interacts with NFKB1; the interaction increases the stability of MAP3K8 but inhibits its MEK phosphorylation activity, whereas loss of interaction following LPS stimulation leads to its degradation. Interacts with CD40 and TRAF6; the interaction is required for ERK activation. Interacts with KSR2; the interaction inhibits ERK and NF-kappa-B activation. The cofactor is Mg(2+). Post-translationally, autophosphorylated. In terms of tissue distribution, expressed in spleen, thymus, liver and lung.

The protein localises to the cytoplasm. It catalyses the reaction L-seryl-[protein] + ATP = O-phospho-L-seryl-[protein] + ADP + H(+). It carries out the reaction L-threonyl-[protein] + ATP = O-phospho-L-threonyl-[protein] + ADP + H(+). Functionally, required for lipopolysaccharide (LPS)-induced, TLR4-mediated activation of the MAPK/ERK pathway in macrophages, thus being critical for production of the pro-inflammatory cytokine TNF-alpha (TNF) during immune responses. Involved in the regulation of T-helper cell differentiation and IFNG expression in T-cells. Involved in mediating host resistance to bacterial infection through negative regulation of type I interferon (IFN) production. Transduces CD40 and TNFRSF1A signals that activate ERK in B-cells and macrophages, and thus may play a role in the regulation of immunoglobulin production. May also play a role in the transduction of TNF signals that activate JNK and NF-kappa-B in some cell types. In adipocytes, activates MAPK/ERK pathway in an IKBKB-dependent manner in response to IL1B and TNF, but not insulin, leading to induction of lipolysis. Plays a role in the cell cycle. This chain is Mitogen-activated protein kinase kinase kinase 8 (Map3k8), found in Rattus norvegicus (Rat).